A 638-amino-acid polypeptide reads, in one-letter code: Sodium- and chloride-dependent neutral and basic amino acid transporter B(0+) (638 aa).

Topologically, residues 1–44 (MDRLKCPNFFKCRQKEKVTASSENFHVGENDENQERGNWSKKSD) are cytoplasmic. The next 3 membrane-spanning stretches (helical) occupy residues 45 to 65 (YLLS…FPYL), 72 to 92 (GAFL…LFFL), and 110 to 130 (ILPL…FVAI). Residues 131–230 (YYNVIIAYSL…RSSGMDETGV (100 aa)) are Extracellular-facing. Residues Asn155, Asn163, Asn174, Asn185, Asn193, and Asn198 are each glycosylated (N-linked (GlcNAc...) asparagine). 2 helical membrane passes run 231–251 (VVWY…AALF) and 257–277 (SGKV…ILLI). Asn298 carries an N-linked (GlcNAc...) asparagine glycan. 7 helical membrane-spanning segments follow: residues 311–331 (AATQ…ALSS), 344–364 (IIVC…IFSI), 395–415 (LAQL…LLTL), 453–473 (ILFL…VHLI), 476–496 (FCAG…IIWI), 524–544 (CWFV…LVKF), and 559–579 (VALG…MAII). The Cytoplasmic segment spans residues 580-638 (KIVQAEGNILQRIISCCRPASNWGPYLEKHRGERYRDMAEPAKETDHEIPTISGSTKPE). Residues 618–628 (AEPAKETDHEI) show a composition bias toward basic and acidic residues. The tract at residues 618 to 638 (AEPAKETDHEIPTISGSTKPE) is disordered.

The protein belongs to the sodium:neurotransmitter symporter (SNF) (TC 2.A.22) family. SLC6A14 subfamily. As to expression, expressed in the distal region of the intestinal tract: cecum and colon.

The protein localises to the membrane. Its subcellular location is the apical cell membrane. It catalyses the reaction glycine(out) + chloride(out) + 2 Na(+)(out) = glycine(in) + chloride(in) + 2 Na(+)(in). The enzyme catalyses L-leucine(out) + chloride(out) + 2 Na(+)(out) = L-leucine(in) + chloride(in) + 2 Na(+)(in). The catalysed reaction is L-glutamine(out) + chloride(out) + 2 Na(+)(out) = L-glutamine(in) + chloride(in) + 2 Na(+)(in). It carries out the reaction L-arginine(out) + chloride(out) + 2 Na(+)(out) = L-arginine(in) + chloride(in) + 2 Na(+)(in). It catalyses the reaction (R)-carnitine(out) + chloride(out) + 2 Na(+)(out) = (R)-carnitine(in) + chloride(in) + 2 Na(+)(in). The enzyme catalyses O-propanoyl-(R)-carnitine(out) + chloride(out) + 2 Na(+)(out) = O-propanoyl-(R)-carnitine(in) + chloride(in) + 2 Na(+)(in). The catalysed reaction is L-isoleucine(out) + chloride(out) + 2 Na(+)(out) = L-isoleucine(in) + chloride(in) + 2 Na(+)(in). It carries out the reaction L-methionine(out) + chloride(out) + 2 Na(+)(out) = L-methionine(in) + chloride(in) + 2 Na(+)(in). It catalyses the reaction L-valine(out) + chloride(out) + 2 Na(+)(out) = L-valine(in) + chloride(in) + 2 Na(+)(in). The enzyme catalyses L-alanine(out) + chloride(out) + 2 Na(+)(out) = L-alanine(in) + chloride(in) + 2 Na(+)(in). The catalysed reaction is L-serine(out) + chloride(out) + 2 Na(+)(out) = L-serine(in) + chloride(in) + 2 Na(+)(in). It carries out the reaction L-cysteine(out) + chloride(out) + 2 Na(+)(out) = L-cysteine(in) + chloride(in) + 2 Na(+)(in). It catalyses the reaction L-asparagine(out) + chloride(out) + 2 Na(+)(out) = L-asparagine(in) + chloride(in) + 2 Na(+)(in). The enzyme catalyses L-threonine(out) + chloride(out) + 2 Na(+)(out) = L-threonine(in) + chloride(in) + 2 Na(+)(in). The catalysed reaction is L-phenylalanine(out) + chloride(out) + 2 Na(+)(out) = L-phenylalanine(in) + chloride(in) + 2 Na(+)(in). It carries out the reaction L-tryptophan(out) + chloride(out) + 2 Na(+)(out) = L-tryptophan(in) + chloride(in) + 2 Na(+)(in). It catalyses the reaction L-tyrosine(out) + chloride(out) + 2 Na(+)(out) = L-tyrosine(in) + chloride(in) + 2 Na(+)(in). The enzyme catalyses L-histidine(out) + chloride(out) + 2 Na(+)(out) = L-histidine(in) + chloride(in) + 2 Na(+)(in). The catalysed reaction is L-lysine(out) + chloride(out) + 2 Na(+)(out) = L-lysine(in) + chloride(in) + 2 Na(+)(in). It carries out the reaction O-butanoyl-(R)-carnitine(out) + chloride(out) + 2 Na(+)(out) = O-butanoyl-(R)-carnitine(in) + chloride(in) + 2 Na(+)(in). In terms of biological role, amino acid transporter that plays an important role in the absorption of amino acids in the intestinal tract. Mediates the uptake of a broad range of neutral and cationic amino acids (with the exception of proline) in a Na(+)/Cl(-)-dependent manner. Transports non-alpha-amino acids such as beta-alanine with low affinity, and has a higher affinity for dipolar and cationic amino acids such as leucine and lysine. Can also transport carnitine, butyrylcarnitine and propionylcarnitine coupled to the transmembrane gradients of Na(+) and Cl(-). This Mus musculus (Mouse) protein is Sodium- and chloride-dependent neutral and basic amino acid transporter B(0+).